Reading from the N-terminus, the 264-residue chain is Type III pantothenate kinase (264 aa).

6–13 lines the ATP pocket; sequence DIGNTQTV. Substrate is bound by residues Y100 and 107–110; that span reads GADR. D109 serves as the catalytic Proton acceptor. Position 129 (D129) interacts with K(+). An ATP-binding site is contributed by T132. T185 contributes to the substrate binding site.

This sequence belongs to the type III pantothenate kinase family. As to quaternary structure, homodimer. Requires NH4(+) as cofactor. K(+) is required as a cofactor.

The protein resides in the cytoplasm. The enzyme catalyses (R)-pantothenate + ATP = (R)-4'-phosphopantothenate + ADP + H(+). It participates in cofactor biosynthesis; coenzyme A biosynthesis; CoA from (R)-pantothenate: step 1/5. Catalyzes the phosphorylation of pantothenate (Pan), the first step in CoA biosynthesis. This Rubrobacter xylanophilus (strain DSM 9941 / JCM 11954 / NBRC 16129 / PRD-1) protein is Type III pantothenate kinase.